A 217-amino-acid polypeptide reads, in one-letter code: Octanoyltransferase (217 aa).

One can recognise a BPL/LPL catalytic domain in the interval 32 to 207; sequence SDSPDELWIV…TLSQLLGYQQ (176 aa). Residues 71–78, 138–140, and 151–153 each bind substrate; these read RGGQVTYH, SLG, and GLA. The Acyl-thioester intermediate role is filled by C169.

This sequence belongs to the LipB family.

It localises to the cytoplasm. It catalyses the reaction octanoyl-[ACP] + L-lysyl-[protein] = N(6)-octanoyl-L-lysyl-[protein] + holo-[ACP] + H(+). It functions in the pathway protein modification; protein lipoylation via endogenous pathway; protein N(6)-(lipoyl)lysine from octanoyl-[acyl-carrier-protein]: step 1/2. Functionally, catalyzes the transfer of endogenously produced octanoic acid from octanoyl-acyl-carrier-protein onto the lipoyl domains of lipoate-dependent enzymes. Lipoyl-ACP can also act as a substrate although octanoyl-ACP is likely to be the physiological substrate. This Shewanella sp. (strain ANA-3) protein is Octanoyltransferase.